The sequence spans 296 residues: Glycine--tRNA ligase alpha subunit (296 aa).

This sequence belongs to the class-II aminoacyl-tRNA synthetase family. As to quaternary structure, tetramer of two alpha and two beta subunits.

The protein resides in the cytoplasm. The enzyme catalyses tRNA(Gly) + glycine + ATP = glycyl-tRNA(Gly) + AMP + diphosphate. This is Glycine--tRNA ligase alpha subunit from Maricaulis maris (strain MCS10) (Caulobacter maris).